The sequence spans 416 residues: Transcription factor LATE FLOWERING (416 aa).

Composition is skewed to low complexity over residues 176–186 and 200–212; these read STTTTTTALPP and TSPTTKTTTTSET. Disordered regions lie at residues 176-226 and 276-311; these read STTT…AGGS and LGGPASASDPSSRPPPPPQRPRRKNVRISSDPQTVA. The segment at 303–316 is basic motif; degenerate; sequence ISSDPQTVAARLRR. Residues 303-352 enclose the bHLH domain; it reads ISSDPQTVAARLRRERVSERLRVLQRLVPGGSKMDTATMLDEAASYLKFL. The helix-loop-helix motif stretch occupies residues 317 to 352; it reads ERVSERLRVLQRLVPGGSKMDTATMLDEAASYLKFL.

It belongs to the bHLH protein family. Interacts with PIL13 and PIL15.

It is found in the nucleus. Its function is as follows. Transcription factor involved in the negative regulation of flowering. May be involved in the repression of the flowering factor GI and HD1 by interacting with PIL13 and PIL15 and competing with PRR1. Possesses transactivation activity in yeast. The polypeptide is Transcription factor LATE FLOWERING (Oryza sativa subsp. japonica (Rice)).